The primary structure comprises 116 residues: Fluoride-specific ion channel FluC 1 (116 aa).

A run of 4 helical transmembrane segments spans residues 1–21 (MGKL…RYTV), 31–51 (IPAG…FLTF), 58–78 (MVYL…TFAY), and 92–112 (FFLN…IAYL). Positions 68 and 71 each coordinate Na(+).

The protein belongs to the fluoride channel Fluc/FEX (TC 1.A.43) family.

It is found in the cell membrane. The catalysed reaction is fluoride(in) = fluoride(out). Na(+) is not transported, but it plays an essential structural role and its presence is essential for fluoride channel function. Functionally, fluoride-specific ion channel. Important for reducing fluoride concentration in the cell, thus reducing its toxicity. The sequence is that of Fluoride-specific ion channel FluC 1 from Methanosarcina barkeri (strain Fusaro / DSM 804).